Consider the following 941-residue polypeptide: Protocadherin alpha-12 (941 aa).

The signal sequence occupies residues 1–29; sequence MVIIGPRGPGSQRLLLSLLLLAAWEVGSG. 6 Cadherin domains span residues 30 to 133, 134 to 242, 243 to 350, 351 to 455, 456 to 565, and 581 to 678; these read QLHY…PPVF, RERE…GPAF, DKPS…VPEV, MVTS…APAF, AQPE…APAL, and VPRS…APKT. Residues 30–697 are Extracellular-facing; sequence QLHYSVYEEA…DPEAALVDIN (668 aa). N-linked (GlcNAc...) asparagine glycans are attached at residues asparagine 257 and asparagine 265. N-linked (GlcNAc...) asparagine glycosylation is present at asparagine 548. Residues 698-718 form a helical membrane-spanning segment; the sequence is VYLIIAICAVSSLLVLTLLLY. At 719-941 the chain is on the cytoplasmic side; it reads TALRCSAPPT…GNSTTDNSDQ (223 aa). PXXP repeat units follow at residues 734 to 737, 790 to 793, 823 to 826, 863 to 866, and 882 to 885; these read PGKP, PRQP, PGGP, GPGN, and PGSP. Residues 734–885 form a 5 X 4 AA repeats of P-X-X-P region; the sequence is PGKPTLVCSS…PDKFIIPGSP (152 aa). The tract at residues 818-941 is disordered; it reads ILRAGPGGPD…GNSTTDNSDQ (124 aa). The segment covering 900 to 914 has biased composition (basic and acidic residues); that stretch reads DKSDFITFGKKEETK.

The protein resides in the cell membrane. Functionally, potential calcium-dependent cell-adhesion protein. May be involved in the establishment and maintenance of specific neuronal connections in the brain. The polypeptide is Protocadherin alpha-12 (PCDHA12) (Homo sapiens (Human)).